The sequence spans 284 residues: Bifunctional protein FolD (284 aa).

Residues G165–S167, S190, and V231 contribute to the NADP(+) site.

It belongs to the tetrahydrofolate dehydrogenase/cyclohydrolase family. In terms of assembly, homodimer.

It carries out the reaction (6R)-5,10-methylene-5,6,7,8-tetrahydrofolate + NADP(+) = (6R)-5,10-methenyltetrahydrofolate + NADPH. It catalyses the reaction (6R)-5,10-methenyltetrahydrofolate + H2O = (6R)-10-formyltetrahydrofolate + H(+). It participates in one-carbon metabolism; tetrahydrofolate interconversion. Functionally, catalyzes the oxidation of 5,10-methylenetetrahydrofolate to 5,10-methenyltetrahydrofolate and then the hydrolysis of 5,10-methenyltetrahydrofolate to 10-formyltetrahydrofolate. The protein is Bifunctional protein FolD of Geobacillus thermodenitrificans (strain NG80-2).